The sequence spans 221 residues: Thiamine-phosphate synthase (221 aa).

Residues glutamine 41–lysine 45 and asparagine 82 each bind 4-amino-2-methyl-5-(diphosphooxymethyl)pyrimidine. Mg(2+) is bound by residues aspartate 83 and aspartate 102. A 4-amino-2-methyl-5-(diphosphooxymethyl)pyrimidine-binding site is contributed by serine 120. Threonine 146–threonine 148 contacts 2-[(2R,5Z)-2-carboxy-4-methylthiazol-5(2H)-ylidene]ethyl phosphate. Lysine 149 provides a ligand contact to 4-amino-2-methyl-5-(diphosphooxymethyl)pyrimidine. Glycine 177 is a binding site for 2-[(2R,5Z)-2-carboxy-4-methylthiazol-5(2H)-ylidene]ethyl phosphate.

It belongs to the thiamine-phosphate synthase family. The cofactor is Mg(2+).

It catalyses the reaction 2-[(2R,5Z)-2-carboxy-4-methylthiazol-5(2H)-ylidene]ethyl phosphate + 4-amino-2-methyl-5-(diphosphooxymethyl)pyrimidine + 2 H(+) = thiamine phosphate + CO2 + diphosphate. The enzyme catalyses 2-(2-carboxy-4-methylthiazol-5-yl)ethyl phosphate + 4-amino-2-methyl-5-(diphosphooxymethyl)pyrimidine + 2 H(+) = thiamine phosphate + CO2 + diphosphate. It carries out the reaction 4-methyl-5-(2-phosphooxyethyl)-thiazole + 4-amino-2-methyl-5-(diphosphooxymethyl)pyrimidine + H(+) = thiamine phosphate + diphosphate. It functions in the pathway cofactor biosynthesis; thiamine diphosphate biosynthesis; thiamine phosphate from 4-amino-2-methyl-5-diphosphomethylpyrimidine and 4-methyl-5-(2-phosphoethyl)-thiazole: step 1/1. In terms of biological role, condenses 4-methyl-5-(beta-hydroxyethyl)thiazole monophosphate (THZ-P) and 2-methyl-4-amino-5-hydroxymethyl pyrimidine pyrophosphate (HMP-PP) to form thiamine monophosphate (TMP). This Mycolicibacterium vanbaalenii (strain DSM 7251 / JCM 13017 / BCRC 16820 / KCTC 9966 / NRRL B-24157 / PYR-1) (Mycobacterium vanbaalenii) protein is Thiamine-phosphate synthase.